The sequence spans 1020 residues: Calcium-transporting ATPase sarcoplasmic/endoplasmic reticulum type (1020 aa).

The Cytoplasmic portion of the chain corresponds to 1–48 (MEDGHSKTVEQSLNFFGTDPERGLTLDQIKANQKKYGPNELPTEEGKS). A helical membrane pass occupies residues 49-69 (IWQLVLEQFDDLLVKILLLAA). At 70 to 89 (IISFVLALFEEHEETFTAFV) the chain is on the lumenal side. Residues 90-110 (EPLVILLILIANAVVGVWQER) form a helical membrane-spanning segment. The Cytoplasmic portion of the chain corresponds to 111–253 (NAESAIEALK…EIKTPLQQKL (143 aa)). At Ser-240 the chain carries Phosphoserine. A helical membrane pass occupies residues 254 to 273 (DEFGEQLSKVISVICVAVWA). Topologically, residues 274–295 (INIGHFNDPAHGGSWIKGAIYY) are lumenal. A helical membrane pass occupies residues 296–313 (FKIAVALAVAAIPEGLPA). Residues Val-304, Ala-305, Ile-307, and Glu-309 each contribute to the Ca(2+) site. Residues 314–757 (VITTCLALGT…EEGRAIYNNM (444 aa)) lie on the Cytoplasmic side of the membrane. Asp-351 serves as the catalytic 4-aspartylphosphate intermediate. Mg(2+) contacts are provided by Asp-703 and Asp-707. The helical transmembrane segment at 758 to 777 (KQFIRYLISSNIGEVVSIFL) threads the bilayer. Positions 768 and 771 each coordinate Ca(2+). At 778–787 (TAALGLPEAL) the chain is on the lumenal side. A helical transmembrane segment spans residues 788 to 808 (IPVQLLWVNLVTDGLPATALG). Residues Asn-796, Thr-799, and Asp-800 each contribute to the Ca(2+) site. Over 809-828 (FNPPDLDIMEKPPRKADEGL) the chain is Cytoplasmic. Residues 829–851 (ISGWLFFRYMAIGFYVGAATVGA) traverse the membrane as a helical segment. Residues 852–897 (AAWWFVFSDEGPKLSYWQLTHHLSCLGGGDEFKGVDCKIFSDPHAM) are Lumenal-facing. The chain crosses the membrane as a helical span at residues 898-917 (TMALSVLVTIEMLNAMNSLS). Glu-908 contributes to the Ca(2+) binding site. The Cytoplasmic segment spans residues 918–930 (ENQSLITMPPWCN). A helical membrane pass occupies residues 931-949 (LWLIGSMALSFTLHFVILY). Residues 950 to 964 (VDVLSTVFQVTPLSA) are Lumenal-facing. The chain crosses the membrane as a helical span at residues 965-985 (EEWITVMKFSIPVVLLDETLK). Topologically, residues 986–1020 (FVARKIADGESPIYKMHGIVLMWAVFFGLLYAMML) are cytoplasmic.

It belongs to the cation transport ATPase (P-type) (TC 3.A.3) family. Interacts with SclA and SclB.

It is found in the endoplasmic reticulum membrane. Its subcellular location is the sarcoplasmic reticulum membrane. The catalysed reaction is Ca(2+)(in) + ATP + H2O = Ca(2+)(out) + ADP + phosphate + H(+). Its function is as follows. This magnesium-dependent enzyme catalyzes the hydrolysis of ATP coupled with the transport of calcium. The sequence is that of Calcium-transporting ATPase sarcoplasmic/endoplasmic reticulum type from Drosophila melanogaster (Fruit fly).